A 930-amino-acid chain; its full sequence is MKLKDTLNLGKTAFPMRAGLPTKEPVWQKEWEDAKLYQRRQELNEGKPHFVLHDGPPYANGNIHVGHAMNHISKDIIIRSKSMSGFNAPYIPGWDTHGLPIEQVLAKQGVKRKEMDLVEYLKLCREYALSQVYKQRDDFKRLGMSGDWENLYVTLTPDYEAAQIRVFGEMANKGYIYRGAKPVYWSWSSESALAEAEIEYHDLVSTSLYYANKVKDGKGILDTDTYIVVWTTTPFTITASRGLTVGADIDYVLVQPASETRKFVVAAELLTSLSEKFGWADVQVLATYRGQELNHIVTEHPWDTAVDELVILGDHVTTDSGTGIVHTAPGFGEDDYNVGIANGLEVAVTVDERGIMMANAGPEFEGQFYDKVVPTVIEKLGNLLLAQEEISHSYPFDWRTKKPIIWRAVPQWFASVSKFRQEILDAIDKVKFHTEWGKVRLYNMIRDRGDWVISRQRAWGVPLPIFYAEDGTAIMTAETIEHVAQLFEVHGSSIWWERDAKDLLPEGFTHPGSPNGEFKKETDIMDVWFDSGSSWNGVLVNRPNLTYPADLYLEGSDQYRGWFNSSLITSVANHGVAPYKQILSQGFTLDGKGEKMSKSLGNTIAPSDVEKQFGAEILRLWVTSVDSSNDVRISMDILSQVSETYRKIRNTLRFLIANTSDFNPAQDVVAYDELRSVDKYMTIRFNQLVKTIRDAYADFEFLTIYKALVNFINVDLSAFYLDFAKDVVYIEGAKSLERRQMQTVFYDILVKITKLLTPILPHTAEEIWSYLEFEAEDFVQLSELPEAQTFANQEEVLDTWAAFMDFRGQAQKALEEARNAKVIGKSLEAHLTVYPNEVVKTLLEAVNSNVAQLLIVSDLTIAEGPAPEAALSFEDVAFTVERAAGQVCDRCRRIDPTTAERSYQAVICDHCASIVEENFAEAVAEGFEEK.

A 'HIGH' region motif is present at residues 57–67; that stretch reads PYANGNIHVGH. Glu-554 lines the L-isoleucyl-5'-AMP pocket. Residues 595–599 carry the 'KMSKS' region motif; that stretch reads KMSKS. ATP is bound at residue Lys-598. The Zn(2+) site is built by Cys-888, Cys-891, Cys-908, and Cys-911.

This sequence belongs to the class-I aminoacyl-tRNA synthetase family. IleS type 1 subfamily. In terms of assembly, monomer. Requires Zn(2+) as cofactor.

It localises to the cytoplasm. It catalyses the reaction tRNA(Ile) + L-isoleucine + ATP = L-isoleucyl-tRNA(Ile) + AMP + diphosphate. Catalyzes the attachment of isoleucine to tRNA(Ile). As IleRS can inadvertently accommodate and process structurally similar amino acids such as valine, to avoid such errors it has two additional distinct tRNA(Ile)-dependent editing activities. One activity is designated as 'pretransfer' editing and involves the hydrolysis of activated Val-AMP. The other activity is designated 'posttransfer' editing and involves deacylation of mischarged Val-tRNA(Ile). This is Isoleucine--tRNA ligase from Streptococcus pneumoniae (strain ATCC 700669 / Spain 23F-1).